A 140-amino-acid chain; its full sequence is Profilin-1 (140 aa).

A2 carries the post-translational modification N-acetylalanine. Residue S28 is modified to Phosphoserine. Residue K54 forms a Glycyl lysine isopeptide (Lys-Gly) (interchain with G-Cter in SUMO2); alternate linkage. K54 is covalently cross-linked (Glycyl lysine isopeptide (Lys-Gly) (interchain with G-Cter in ubiquitin); alternate). S57 is modified (phosphoserine). K108 is modified (N6-acetyllysine). Position 129 is a phosphotyrosine (Y129). Phosphoserine; by ROCK1 is present on S138.

Belongs to the profilin family. In terms of assembly, found in a complex with XPO6, Ran, ACTB and PFN1. Interacts with ACTB. Interacts with VASP. Interacts with HTT. Interacts with SH3BGRL. Occurs in many kinds of cells as a complex with monomeric actin in a 1:1 ratio. Interacts with ACTMAP. In terms of processing, phosphorylation at Ser-138 reduces its affinity for G-actin and blocks its interaction with HTT, reducing its ability to inhibit androgen receptor (AR) and HTT aggregation.

It is found in the cytoplasm. The protein resides in the cytoskeleton. Functionally, binds to actin and affects the structure of the cytoskeleton. At high concentrations, profilin prevents the polymerization of actin, whereas it enhances it at low concentrations. By binding to PIP2, it inhibits the formation of IP3 and DG. Inhibits androgen receptor (AR) and HTT aggregation and binding of G-actin is essential for its inhibition of AR. The protein is Profilin-1 (Pfn1) of Mus musculus (Mouse).